Consider the following 386-residue polypeptide: Leupaxin (386 aa).

Position 1 is an N-acetylmethionine (Met-1). An LD motif 1 motif is present at residues 3 to 15 (ELDALLEELERST). Residues 12 to 51 (ERSTLQDSDEYSNSAPLPLDQSSRKESNLDETSKMLSVQD) form a disordered region. Residues 16-26 (LQDSDEYSNSA) show a composition bias toward polar residues. A Phosphoserine modification is found at Ser-19. A Phosphotyrosine modification is found at Tyr-22. A compositionally biased stretch (basic and acidic residues) spans 33–44 (SSRKESNLDETS). Tyr-62 is modified (phosphotyrosine). Short sequence motifs (LD motif) lie at residues 70–82 (NVYSEVQEPKKSP) and 92–103 (QLDELMAHLSEM). Residue Tyr-72 is modified to Phosphotyrosine; by LYN. Residue Ser-81 is modified to Phosphoserine. 4 consecutive LIM zinc-binding domains span residues 150 to 209 (GHCA…LFSP), 210 to 267 (RCAY…AMFS), 268 to 327 (PKCG…RRGT), and 328 to 386 (LCHG…LFSL).

The protein belongs to the paxillin family. As to quaternary structure, interacts with unphosphorylated ITGA4. Interacts with AR and SRF. Interacts with PTK2B/PYK2, PTPN22 and PTPN12. Interacts (via LD motif 3) with LYN and the interaction is induced upon B-cell antigen receptor (BCR) activation. Interacts (via LD motif 3) with PTK2/FAK. In terms of processing, phosphorylated on tyrosine residues. Phosphorylation on Tyr-72 is important for its inhibitory function. Bombesin stimulates phosphorylation on Tyr-22, Tyr-62 and Tyr-72.

Its subcellular location is the cytoplasm. It localises to the cell junction. The protein localises to the focal adhesion. The protein resides in the nucleus. It is found in the perinuclear region. Its subcellular location is the cell projection. It localises to the podosome. The protein localises to the cell membrane. Transcriptional coactivator for androgen receptor (AR) and serum response factor (SRF). Contributes to the regulation of cell adhesion, spreading and cell migration and acts as a negative regulator in integrin-mediated cell adhesion events. Suppresses the integrin-induced tyrosine phosphorylation of paxillin (PXN). May play a critical role as an adapter protein in the formation of the adhesion zone in osteoclasts. Negatively regulates B-cell antigen receptor (BCR) signaling. The protein is Leupaxin (LPXN) of Oryctolagus cuniculus (Rabbit).